A 558-amino-acid polypeptide reads, in one-letter code: Formate--tetrahydrofolate ligase (558 aa).

66 to 73 lines the ATP pocket; sequence TPAGEGKT.

It belongs to the formate--tetrahydrofolate ligase family.

The enzyme catalyses (6S)-5,6,7,8-tetrahydrofolate + formate + ATP = (6R)-10-formyltetrahydrofolate + ADP + phosphate. Its pathway is one-carbon metabolism; tetrahydrofolate interconversion. The polypeptide is Formate--tetrahydrofolate ligase (Neisseria meningitidis serogroup B (strain ATCC BAA-335 / MC58)).